A 208-amino-acid polypeptide reads, in one-letter code: LysM and putative peptidoglycan-binding domain-containing protein 2 (208 aa).

The disordered stretch occupies residues 1-54 (MAEFSPVLPPLRDDGGGGRYGQPLFPRSRSGSESDSELSQSLARTKTRSYGSTA). Over residues 27–42 (RSRSGSESDSELSQSL) the composition is skewed to low complexity. The LysM domain occupies 65–109 (IEHRVTDGETLQGIALKYGVTMEQIKRVNKLFSNDCIFLRNTLSI). Disordered stretches follow at residues 122 to 169 (LSLE…EELS) and 187 to 208 (AARKLKEDGGREEDDTNSYQEI). The segment covering 129-140 (SEGNTPQESPCV) has biased composition (polar residues). Residues 147–156 (PSPPPEPSVP) show a composition bias toward pro residues.

This is LysM and putative peptidoglycan-binding domain-containing protein 2 (lysmd2) from Danio rerio (Zebrafish).